Here is a 269-residue protein sequence, read N- to C-terminus: Cytochrome c oxidase subunit 3 (269 aa).

Transmembrane regions (helical) follow at residues Asn46–Phe66, Gly90–Phe110, Pro138–Ile160, Ala167–Val187, Phe207–Leu227, and Ile247–Trp267.

Belongs to the cytochrome c oxidase subunit 3 family. As to quaternary structure, component of the cytochrome c oxidase (complex IV, CIV), a multisubunit enzyme composed of a catalytic core of 3 subunits and several supernumerary subunits. The complex exists as a monomer or a dimer and forms supercomplexes (SCs) in the inner mitochondrial membrane with ubiquinol-cytochrome c oxidoreductase (cytochrome b-c1 complex, complex III, CIII).

It is found in the mitochondrion inner membrane. It carries out the reaction 4 Fe(II)-[cytochrome c] + O2 + 8 H(+)(in) = 4 Fe(III)-[cytochrome c] + 2 H2O + 4 H(+)(out). Its function is as follows. Component of the cytochrome c oxidase, the last enzyme in the mitochondrial electron transport chain which drives oxidative phosphorylation. The respiratory chain contains 3 multisubunit complexes succinate dehydrogenase (complex II, CII), ubiquinol-cytochrome c oxidoreductase (cytochrome b-c1 complex, complex III, CIII) and cytochrome c oxidase (complex IV, CIV), that cooperate to transfer electrons derived from NADH and succinate to molecular oxygen, creating an electrochemical gradient over the inner membrane that drives transmembrane transport and the ATP synthase. Cytochrome c oxidase is the component of the respiratory chain that catalyzes the reduction of oxygen to water. Electrons originating from reduced cytochrome c in the intermembrane space (IMS) are transferred via the dinuclear copper A center (CU(A)) of subunit 2 and heme A of subunit 1 to the active site in subunit 1, a binuclear center (BNC) formed by heme A3 and copper B (CU(B)). The BNC reduces molecular oxygen to 2 water molecules using 4 electrons from cytochrome c in the IMS and 4 protons from the mitochondrial matrix. The chain is Cytochrome c oxidase subunit 3 (COIII) from Podospora anserina (strain S / ATCC MYA-4624 / DSM 980 / FGSC 10383) (Pleurage anserina).